Consider the following 264-residue polypeptide: Acyl-[acyl-carrier-protein]--UDP-N-acetylglucosamine O-acyltransferase (264 aa).

Belongs to the transferase hexapeptide repeat family. LpxA subfamily. Homotrimer.

It is found in the cytoplasm. It carries out the reaction a (3R)-hydroxyacyl-[ACP] + UDP-N-acetyl-alpha-D-glucosamine = a UDP-3-O-[(3R)-3-hydroxyacyl]-N-acetyl-alpha-D-glucosamine + holo-[ACP]. Its pathway is glycolipid biosynthesis; lipid IV(A) biosynthesis; lipid IV(A) from (3R)-3-hydroxytetradecanoyl-[acyl-carrier-protein] and UDP-N-acetyl-alpha-D-glucosamine: step 1/6. Its function is as follows. Involved in the biosynthesis of lipid A, a phosphorylated glycolipid that anchors the lipopolysaccharide to the outer membrane of the cell. In Rickettsia typhi (strain ATCC VR-144 / Wilmington), this protein is Acyl-[acyl-carrier-protein]--UDP-N-acetylglucosamine O-acyltransferase.